Reading from the N-terminus, the 140-residue chain is Transcription antitermination protein NusB (140 aa).

This sequence belongs to the NusB family.

Functionally, involved in transcription antitermination. Required for transcription of ribosomal RNA (rRNA) genes. Binds specifically to the boxA antiterminator sequence of the ribosomal RNA (rrn) operons. The protein is Transcription antitermination protein NusB of Pseudothermotoga lettingae (strain ATCC BAA-301 / DSM 14385 / NBRC 107922 / TMO) (Thermotoga lettingae).